Reading from the N-terminus, the 170-residue chain is Cathelicidin antimicrobial peptide (170 aa).

The signal sequence occupies residues 1-30 (MKTQRDGHSLGWWSLVLLLLGLVMPLAIIA). Positions 31 to 131 (QVLSYKEAVL…DISCDKDNKR (101 aa)) are cleaved as a propeptide — cathelin-like domain (CLD). Cystine bridges form between C86-C97 and C108-C125. Residues 150-162 (SKRIVQRIKDFLR) form an active core region.

The protein belongs to the cathelicidin family. In terms of assembly, monomer, homodimer or homotrimer (in vitro). Oligomerizes as tetra- or hexamer in solution (in vitro). In terms of processing, proteolytically cleaved by proteinase PRTN3 into antibacterial peptide LL-37. Proteolytically cleaved by cathepsin CTSG and neutrophil elastase ELANE. Resistant to proteolytic degradation in solution, and when bound to both zwitterionic (mimicking mammalian membranes) and negatively charged membranes (mimicking bacterial membranes). Post-translationally, after secretion onto the skin surface, the CAMP gene product is processed by a serine protease-dependent mechanism into multiple novel antimicrobial peptides distinct from and shorter than cathelicidin LL-37. These peptides show enhanced antimicrobial action, acquiring the ability to kill skin pathogens such as S.aureus, E.coli and C.albicans. These peptides have lost the ability to stimulate CXCL8/IL8 release from keratinocytes. The peptides act synergistically, killing bacteria at lower concentrations when present together, and maintain activity at increased salt condition.

It is found in the secreted. It localises to the vesicle. In terms of biological role, antimicrobial protein that is an integral component of the innate immune system. Binds to bacterial lipopolysaccharides (LPS). Acts via neutrophil N-formyl peptide receptors to enhance the release of CXCL2. Postsecretory processing generates multiple cathelicidin antimicrobial peptides with various lengths which act as a topical antimicrobial defense in sweat on skin. The unprocessed precursor form, cathelicidin antimicrobial peptide, inhibits the growth of Gram-negative E.coli and E.aerogenes with efficiencies comparable to that of the mature peptide LL-37 (in vitro). Antimicrobial peptide that is an integral component of the innate immune system. Binds to bacterial lipopolysaccharides (LPS). Causes membrane permeabilization by forming transmembrane pores (in vitro). Causes lysis of E.coli. Exhibits antimicrobial activity against Gram-negative bacteria such as P.aeruginosa, S.typhimurium, E.aerogenes, E.coli and P.syringae, Gram-positive bacteria such as L.monocytogenes, S.epidermidis, S.pyogenes and S.aureus, as well as vancomycin-resistant enterococci (in vitro). Exhibits antimicrobial activity against methicillin-resistant S.aureus, P.mirabilis, and C.albicans in low-salt media, but not in media containing 100 mM NaCl (in vitro). Forms chiral supramolecular assemblies with quinolone signal (PQS) molecules of P.aeruginosa, which may lead to interference of bacterial quorum signaling and perturbance of bacterial biofilm formation. May form supramolecular fiber-like assemblies on bacterial membranes. Induces cytokine and chemokine producation as well as TNF/TNFA and CSF2/GMCSF production in normal human keratinocytes. Exhibits hemolytic activity against red blood cells. Its function is as follows. Exhibits antimicrobial activity against E.coli and B.megaterium (in vitro). The sequence is that of Cathelicidin antimicrobial peptide from Gorilla gorilla gorilla (Western lowland gorilla).